The sequence spans 257 residues: Nickel import system ATP-binding protein NikD (257 aa).

The ABC transporter domain maps to 4–245 (IDIQNLTIKN…HLHPYTERLI (242 aa)). ATP is bound at residue 37 to 44 (GESGAGKS).

This sequence belongs to the ABC transporter superfamily. The complex is composed of two ATP-binding proteins (NikD and NikE), two transmembrane proteins (NikB and NikC) and a solute-binding protein (NikA).

Its subcellular location is the cell membrane. It carries out the reaction Ni(2+)(out) + ATP + H2O = Ni(2+)(in) + ADP + phosphate + H(+). Functionally, part of the ABC transporter complex NikABCDE (Opp2) involved in nickel import. Probably responsible for energy coupling to the transport system. This Staphylococcus aureus (strain MSSA476) protein is Nickel import system ATP-binding protein NikD.